The sequence spans 597 residues: MKNIRNFSIIAHIDHGKSTLADRFIQYCGGLDLREMSTQVLDSMDIEKERGITIKAQTAALNYKARDGQVYQLNLIDTPGHVDFSYEVSRSLSACEGALLVVDASQGVEAQTVANCYTAIDLGVEVVPVLNKIDLPAADPERVEQEIEDIIGIDAVGAVQCSAKSGIGVEDVLEEIVAKIPAPTGDENAPLQAVIVDSWFDNYVGVVMLIRVKNGTIKLKDKVRFMSTKAETQVEQLGVFTPKSVQKQELKAGEVGFLITGVKELGQAKVGDTVTLVANPATEPLPGFQEVQSQVFAGLYPVESHDYEALRDALEKLQLNDASLKFEPEVSQALGFGFRCGFLGLLHLEIVQERLEREFDMDLITTAPTVVYEVVLKSGEKIEVENPSKLPDIGSIETILEPIITATILVPQEYVGNVMTLCNQKRGVQVNMQYMGRQVMLTYDLPMNEVVMDFFDKLKSTSRGYASLDYHFKEFQPSDLIKLDIMVNGEKVDALSLIVHRQSAVHKGRELASKMRELIPRQMFDIAVQAAIGSRIIARENVKALRKNVLAKCYGGDITRKKKLLEKQKAGKRRMKQVGNVEIPQSAFLAILQVSDK.

The region spanning 2–184 (KNIRNFSIIA…EIVAKIPAPT (183 aa)) is the tr-type G domain. GTP-binding positions include 14 to 19 (DHGKST) and 131 to 134 (NKID).

This sequence belongs to the TRAFAC class translation factor GTPase superfamily. Classic translation factor GTPase family. LepA subfamily.

It localises to the cell inner membrane. It carries out the reaction GTP + H2O = GDP + phosphate + H(+). Functionally, required for accurate and efficient protein synthesis under certain stress conditions. May act as a fidelity factor of the translation reaction, by catalyzing a one-codon backward translocation of tRNAs on improperly translocated ribosomes. Back-translocation proceeds from a post-translocation (POST) complex to a pre-translocation (PRE) complex, thus giving elongation factor G a second chance to translocate the tRNAs correctly. Binds to ribosomes in a GTP-dependent manner. The sequence is that of Elongation factor 4 from Neisseria gonorrhoeae (strain ATCC 700825 / FA 1090).